The primary structure comprises 137 residues: Holo-[acyl-carrier-protein] synthase (137 aa).

Mg(2+) contacts are provided by D8 and E61.

The protein belongs to the P-Pant transferase superfamily. AcpS family. Mg(2+) serves as cofactor.

The protein resides in the cytoplasm. The catalysed reaction is apo-[ACP] + CoA = holo-[ACP] + adenosine 3',5'-bisphosphate + H(+). Its function is as follows. Transfers the 4'-phosphopantetheine moiety from coenzyme A to a Ser of acyl-carrier-protein. This is Holo-[acyl-carrier-protein] synthase from Afipia carboxidovorans (strain ATCC 49405 / DSM 1227 / KCTC 32145 / OM5) (Oligotropha carboxidovorans).